A 338-amino-acid chain; its full sequence is Penicillin V acylase (338 aa).

Residues 1 to 3 constitute a propeptide, removed in mature form; sequence MLG. Cys-4 acts as the Nucleophile in catalysis.

It belongs to the peptidase C59 family. Homotetramer. In terms of processing, expressed as an inactive precursor that is cleaved autocatalytically at Gly-3/Cys-4 to generate an active enzyme. Processing exposes a catalytic N-terminal nucleophile residue with a free alpha amino group.

It carries out the reaction a penicillin + H2O = 6-aminopenicillanate + a carboxylate. With respect to regulation, hydrolase activity is rapidly inhibited by lysine modifying reagents. Functionally, catalyzes the hydrolysis of penicillin V to 6-aminopenicillanate (6-APA). Exhibits high specificity for penicillin V. Penicillin G and other related compounds are hydrolyzed at less than 10% of the rate of penicillin V. Among the cephalosporins, cephalosporin C is resistant to cleavage, whereas cephalosporin G is cleaved at about 1% of the rate of cleavage of penicillin V. The protein is Penicillin V acylase of Lysinibacillus sphaericus (Bacillus sphaericus).